The primary structure comprises 232 residues: Orotidine 5'-phosphate decarboxylase (232 aa).

Residues D11, K32, 59 to 68 (DLKLHDIPHT), T116, R178, Q188, G208, and R209 contribute to the substrate site. The Proton donor role is filled by K61.

This sequence belongs to the OMP decarboxylase family. Type 1 subfamily. As to quaternary structure, homodimer.

The catalysed reaction is orotidine 5'-phosphate + H(+) = UMP + CO2. The protein operates within pyrimidine metabolism; UMP biosynthesis via de novo pathway; UMP from orotate: step 2/2. Functionally, catalyzes the decarboxylation of orotidine 5'-monophosphate (OMP) to uridine 5'-monophosphate (UMP). This is Orotidine 5'-phosphate decarboxylase from Synechococcus sp. (strain JA-3-3Ab) (Cyanobacteria bacterium Yellowstone A-Prime).